The chain runs to 407 residues: MSAKVNKVVLAYSGGLDTSIIVPWLKQNYGNPEVICYCANIGQDDELSGLEEKAIATGASKCYVEDLREEFVRDFLFPLLQSGAVYERTYLLGTSVARPLIARRQAEIALQEGADALAHGCTGKGNDQVRFELTYMAFAPHLKVIAPWREWNIRSREDALDYAAEHNVPVTATLKSIYSRDRNIWHMSHEGGILEDPWNEPEEAMYTLTTDPEAAPDEPEYVVIGFEQGTPVSVNGKRLGPVELLLTLNDIGAKHGIGRVDLVENRLVGMKSHGVYETPGGTILRVAHQGLEQLTLDRDTLHYKDVIAHRYAELVYYGQWYTPLREALDAFVRVTQRNVTGEARLKLYKGNATLVGRRAAKSLYNPDIASFTMSDSYNQKDAEGFIKIFGLPVKVQALLEGRSRGER.

Residues 11–19 and A39 each bind ATP; that span reads AYSGGLDTS. The L-citrulline site is built by Y90 and S95. G120 serves as a coordination point for ATP. L-aspartate is bound by residues T122, N126, and D127. N126 serves as a coordination point for L-citrulline. The L-citrulline site is built by R130, S179, S188, E264, and Y276.

It belongs to the argininosuccinate synthase family. Type 1 subfamily. In terms of assembly, homotetramer.

It localises to the cytoplasm. The enzyme catalyses L-citrulline + L-aspartate + ATP = 2-(N(omega)-L-arginino)succinate + AMP + diphosphate + H(+). It functions in the pathway amino-acid biosynthesis; L-arginine biosynthesis; L-arginine from L-ornithine and carbamoyl phosphate: step 2/3. In Roseiflexus sp. (strain RS-1), this protein is Argininosuccinate synthase.